We begin with the raw amino-acid sequence, 145 residues long: Bacilliredoxin BH2759 (145 aa).

It belongs to the bacilliredoxin family.

The chain is Bacilliredoxin BH2759 from Halalkalibacterium halodurans (strain ATCC BAA-125 / DSM 18197 / FERM 7344 / JCM 9153 / C-125) (Bacillus halodurans).